The sequence spans 307 residues: NAD kinase (307 aa).

Catalysis depends on Asp-80, which acts as the Proton acceptor. Residues 80–81 (DG), His-85, 154–155 (ND), His-165, His-182, Asp-184, 195–200 (TAYALS), and Gln-254 contribute to the NAD(+) site.

Belongs to the NAD kinase family. A divalent metal cation serves as cofactor.

Its subcellular location is the cytoplasm. The catalysed reaction is NAD(+) + ATP = ADP + NADP(+) + H(+). Involved in the regulation of the intracellular balance of NAD and NADP, and is a key enzyme in the biosynthesis of NADP. Catalyzes specifically the phosphorylation on 2'-hydroxyl of the adenosine moiety of NAD to yield NADP. In Acinetobacter baylyi (strain ATCC 33305 / BD413 / ADP1), this protein is NAD kinase.